Reading from the N-terminus, the 275-residue chain is Large ribosomal subunit protein uL2c (275 aa).

Disordered regions lie at residues 1–28 and 227–251; these read MGIR…TKSK and PCDH…TPWG. Polar residues predominate over residues 10–22; sequence TPGTRNRSSSDFS.

It belongs to the universal ribosomal protein uL2 family. Part of the 50S ribosomal subunit.

It localises to the plastid. The protein resides in the chloroplast. The chain is Large ribosomal subunit protein uL2c (rpl2) from Rhodomonas salina (Cryptomonas salina).